The primary structure comprises 561 residues: Cytosolic purine 5'-nucleotidase (561 aa).

Asp-52 functions as the Nucleophile in the catalytic mechanism. GMP is bound by residues Asp-52 and Asp-54. IMP contacts are provided by Asp-52 and Asp-54. 2 residues coordinate Mg(2+): Asp-52 and Asp-54. The Proton donor role is filled by Asp-54. Arg-144 lines the (2R)-2,3-bisphosphoglycerate pocket. ATP is bound by residues Arg-144 and Asn-154. Residues Arg-144 and Asn-154 each coordinate dATP. Position 154 (Asn-154) interacts with adenosine. Asn-154 contacts P(1),P(4)-bis(5'-adenosyl) tetraphosphate. Residues Arg-202, Asp-206, Lys-215, Thr-249, and Asn-250 each coordinate GMP. IMP is bound by residues Arg-202, Asp-206, Lys-215, Thr-249, Asn-250, Ser-251, and Lys-292. Lys-292 is a GMP binding site. Residue Asp-351 participates in Mg(2+) binding. Position 362 (Lys-362) interacts with (2R)-2,3-bisphosphoglycerate. A P(1),P(4)-bis(5'-adenosyl) tetraphosphate-binding site is contributed by Lys-362. At Ser-418 the chain carries Phosphoserine. The adenosine site is built by Met-436 and Gln-453. ATP-binding residues include Gln-453 and Arg-456. The dATP site is built by Gln-453 and Arg-456. Gln-453 contributes to the P(1),P(4)-bis(5'-adenosyl) tetraphosphate binding site. A (2R)-2,3-bisphosphoglycerate-binding site is contributed by Tyr-457. A P(1),P(4)-bis(5'-adenosyl) tetraphosphate-binding site is contributed by Tyr-457. Residues Ser-502, Ser-511, and Ser-527 each carry the phosphoserine modification. A disordered region spans residues 538–561; it reads PLAPQEITHCHDEDDDEEEEEEEE. Residues 548–561 are required for tetramer assembly; sequence HDEDDDEEEEEEEE. Residues 550–561 show a composition bias toward acidic residues; sequence EDDDEEEEEEEE.

It belongs to the 5'(3')-deoxyribonucleotidase family. Homotetramer. It depends on Mg(2+) as a cofactor. Widely expressed.

It is found in the cytoplasm. The protein localises to the cytosol. The enzyme catalyses a ribonucleoside 5'-phosphate + H2O = a ribonucleoside + phosphate. It carries out the reaction a 2'-deoxyribonucleoside + a ribonucleoside 5'-phosphate = a ribonucleoside + a 2'-deoxyribonucleoside 5'-phosphate. The catalysed reaction is IMP + H2O = inosine + phosphate. It catalyses the reaction GMP + H2O = guanosine + phosphate. The enzyme catalyses dIMP + H2O = 2'-deoxyinosine + phosphate. It carries out the reaction dGMP + H2O = 2'-deoxyguanosine + phosphate. The catalysed reaction is XMP + H2O = xanthosine + phosphate. It catalyses the reaction inosine + GMP = guanosine + IMP. The enzyme catalyses dGMP + inosine = 2'-deoxyguanosine + IMP. It carries out the reaction dIMP + inosine = 2'-deoxyinosine + IMP. The catalysed reaction is inosine + UMP = uridine + IMP. It catalyses the reaction inosine + CMP = cytidine + IMP. The enzyme catalyses inosine + AMP = IMP + adenosine. Allosterically activated by various compounds including ATP, 2,3-BPG/2,3-Bisphosphoglyceric acid and Ap4A/P1,P4-bis(5'-adenosyl) tetraphosphate. Binding of an allosteric activator is a prerequisiste to magnesium and substrate binding. Inhibited by inorganic phosphate. Functionally, broad specificity cytosolic 5'-nucleotidase that catalyzes the dephosphorylation of 6-hydroxypurine nucleoside 5'-monophosphates. In addition, possesses a phosphotransferase activity by which it can transfer a phosphate from a donor nucleoside monophosphate to an acceptor nucleoside, preferably inosine, deoxyinosine and guanosine. Has the highest activities for IMP and GMP followed by dIMP, dGMP and XMP. Could also catalyze the transfer of phosphates from pyrimidine monophosphates but with lower efficiency. Through these activities regulates the purine nucleoside/nucleotide pools within the cell. In Homo sapiens (Human), this protein is Cytosolic purine 5'-nucleotidase.